The chain runs to 174 residues: Protein C2-DOMAIN ABA-RELATED 2 (174 aa).

At M1 the chain carries N-acetylmethionine. The 104-residue stretch at 1 to 104 folds into the C2 domain; sequence MENMLGLLRL…EAIRIQNQLG (104 aa). Ca(2+)-binding residues include R21, D22, D27, D73, R74, D75, and D81.

It belongs to the plant CAR protein family. In terms of assembly, binds to PYR/PYL/RCAR abscisic acid intracellular receptors in an ABA-independent manner, both at the plasma membrane and in the nucleus. Ca(2+) is required as a cofactor.

The protein resides in the cell membrane. It localises to the nucleus. Its function is as follows. Stimulates the GTPase/ATPase activities of Obg-like ATPases. Mediates the transient calcium-dependent interaction of PYR/PYL/RCAR abscisic acid (ABA) receptors with the plasma membrane and thus regulates ABA sensitivity. The sequence is that of Protein C2-DOMAIN ABA-RELATED 2 from Arabidopsis thaliana (Mouse-ear cress).